The chain runs to 625 residues: Phosphomethylpyrimidine synthase (625 aa).

Substrate is bound by residues N231, M260, Y289, H325, S345–G347, D386–R389, and E425. H429 is a binding site for Zn(2+). Y452 is a substrate binding site. Residue H493 coordinates Zn(2+). [4Fe-4S] cluster-binding residues include C573, C576, and C581.

This sequence belongs to the ThiC family. As to quaternary structure, homodimer. It depends on [4Fe-4S] cluster as a cofactor.

It catalyses the reaction 5-amino-1-(5-phospho-beta-D-ribosyl)imidazole + S-adenosyl-L-methionine = 4-amino-2-methyl-5-(phosphooxymethyl)pyrimidine + CO + 5'-deoxyadenosine + formate + L-methionine + 3 H(+). Its pathway is cofactor biosynthesis; thiamine diphosphate biosynthesis. In terms of biological role, catalyzes the synthesis of the hydroxymethylpyrimidine phosphate (HMP-P) moiety of thiamine from aminoimidazole ribotide (AIR) in a radical S-adenosyl-L-methionine (SAM)-dependent reaction. The polypeptide is Phosphomethylpyrimidine synthase (Acinetobacter baumannii (strain AB0057)).